The primary structure comprises 350 residues: Biotin synthase (350 aa).

The Radical SAM core domain maps to 38 to 256 (NHVQVSTLLS…IAVARIMMPE (219 aa)). [4Fe-4S] cluster-binding residues include C53, C57, and C60. C97, C128, C188, and R260 together coordinate [2Fe-2S] cluster.

The protein belongs to the radical SAM superfamily. Biotin synthase family. In terms of assembly, homodimer. It depends on [4Fe-4S] cluster as a cofactor. [2Fe-2S] cluster is required as a cofactor.

The enzyme catalyses (4R,5S)-dethiobiotin + (sulfur carrier)-SH + 2 reduced [2Fe-2S]-[ferredoxin] + 2 S-adenosyl-L-methionine = (sulfur carrier)-H + biotin + 2 5'-deoxyadenosine + 2 L-methionine + 2 oxidized [2Fe-2S]-[ferredoxin]. Its pathway is cofactor biosynthesis; biotin biosynthesis; biotin from 7,8-diaminononanoate: step 2/2. Its function is as follows. Catalyzes the conversion of dethiobiotin (DTB) to biotin by the insertion of a sulfur atom into dethiobiotin via a radical-based mechanism. This chain is Biotin synthase, found in Aliivibrio fischeri (strain MJ11) (Vibrio fischeri).